Reading from the N-terminus, the 469-residue chain is Septin homolog spn1 (469 aa).

Residues 1 to 58 (MASMVLADGMPTVKDDSTRSRGSDVDSFTSTDNVTQINVEAAISENKNEEKPIQDNSE) are disordered. Basic and acidic residues predominate over residues 13–24 (VKDDSTRSRGSD). The span at 26–38 (DSFTSTDNVTQIN) shows a compositional bias: polar residues. Residues 92–367 (QGFNFNVLVL…EAYRTERLLS (276 aa)) form the Septin-type G domain. The segment at 102-109 (GESGSGKS) is G1 motif. GTP contacts are provided by residues 102–109 (GESGSGKS), Thr139, Gly165, 244–252 (KADTLTDDE), and Arg317. The G3 motif stretch occupies residues 162–165 (DTPG). The interval 243-246 (AKAD) is G4 motif. Residues 383–469 (SAKLEEERAL…NEKSKRKFFK (87 aa)) are a coiled coil.

This sequence belongs to the TRAFAC class TrmE-Era-EngA-EngB-Septin-like GTPase superfamily. Septin GTPase family. Component of the septin complex composed of two copies of each spn1, spn2, spn3 and spn4.

The protein localises to the cytoplasm. Its subcellular location is the cell cortex. Its function is as follows. Plays a role in the cell cycle. Involved in a late stage of septum formation leading to the separation of the daughter cells. This Schizosaccharomyces pombe (strain 972 / ATCC 24843) (Fission yeast) protein is Septin homolog spn1 (spn1).